Reading from the N-terminus, the 381-residue chain is Glycerophosphocholine acyltransferase 1 (381 aa).

Residues 1 to 63 (MANNEDSNSN…IAKQAEEHER (63 aa)) are Cytoplasmic-facing. A helical transmembrane segment spans residues 64 to 84 (FINKVTHLVGVLGFGGFCFLL). Topologically, residues 85–89 (GARPQ) are lumenal. Residues 90-110 (DIPLVYCFFYVIFVPLRWIYY) traverse the membrane as a helical segment. Topologically, residues 111–116 (RFKKWH) are cytoplasmic. A helical transmembrane segment spans residues 117 to 137 (YYLLDFCYYANTIFLVDLLLY). Over 138-141 (PKNE) the chain is Lumenal. The helical transmembrane segment at 142 to 162 (KLFMVCFSFAEGPLAWAIIVW) threads the bilayer. At 163-173 (RCSLVFSSPDK) the chain is on the cytoplasmic side. Residues 174–194 (IVSVLIHLLPGLVFFTIRWWN) traverse the membrane as a helical segment. At 195–223 (PATFAAMHPVGTDRRVSWPYVEDKAYLFT) the chain is on the lumenal side. The chain crosses the membrane as a helical span at residues 224–244 (WLFLVPLVVYTLWQVLYFLIV). Residues 245–291 (NVLRRQRLLRDPEVMTSYRELSKKAEKANNKLWQLSGLLGDQNRIWM) lie on the Cytoplasmic side of the membrane. Residues 292–312 (YILFQAIFTVATMALTVPIFL) form a helical membrane-spanning segment. Over 313 to 315 (SYR) the chain is Lumenal. Residues 316 to 336 (LHVIFQILKISAAVWNGGSFL) form a helical membrane-spanning segment. Residues 337–381 (LEVMPRQVIQKEKKKKAEMQPIEEQILHHEAVSHPTENEPKSTET) lie on the Cytoplasmic side of the membrane.

This sequence belongs to the GPC1 family.

The protein localises to the membrane. The enzyme catalyses sn-glycerol 3-phosphocholine + an acyl-CoA = a 1-acyl-sn-glycero-3-phosphocholine + CoA. It catalyses the reaction sn-glycero-3-phosphoethanolamine + an acyl-CoA = a monoacyl-sn-glycero-3-phosphoethanolamine + CoA. The catalysed reaction is sn-glycerol 3-phosphocholine + (9Z)-octadecenoyl-CoA = (9Z-octadecenoyl)-sn-glycero-3-phosphocholine + CoA. Functionally, glycerophosphocholine acyltransferase (GPCAT) that utilizes acyl-CoA to acylate glycero-3-phosphocholine (GPC), forming lysophosphatidylcholine (LPC). Shows broad acyl specificities with a preference for 16:0-CoA, polyunsaturated acyl-CoA, and the hydroxylated ricinoleoyl-CoA. Also catalyzes the acylation of glycero-3-phosphoethanolamine (GPE) with acyl-CoA. In addition to acyl-CoA, GPCAT efficiently utilizes LPC and lysophosphatidylethanolamine (LPE) as acyl donors in the acylation of GPC. Contributes to the maintenance of phosphatidylcholine (PC) homeostasis and might also have specific functions in acyl editing of PC, such as transferring acyl groups modified at the sn-2 position of PC to the sn-1. The sequence is that of Glycerophosphocholine acyltransferase 1 from Arabidopsis thaliana (Mouse-ear cress).